The primary structure comprises 164 residues: Peptidyl-prolyl cis-trans isomerase A-like 4F (164 aa).

The PPIase cyclophilin-type domain maps to Phe-7–Gln-163.

Belongs to the cyclophilin-type PPIase family. PPIase A subfamily.

Its subcellular location is the cytoplasm. The enzyme catalyses [protein]-peptidylproline (omega=180) = [protein]-peptidylproline (omega=0). Functionally, PPIases accelerate the folding of proteins. It catalyzes the cis-trans isomerization of proline imidic peptide bonds in oligopeptides. The chain is Peptidyl-prolyl cis-trans isomerase A-like 4F from Homo sapiens (Human).